Here is a 53-residue protein sequence, read N- to C-terminus: MLRYAIIFFIIAIIAAVFGFGGIAAGAAEIAKILFYIFVVIFLVTLLLGVVRR.

Helical transmembrane passes span Ala-5 to Ala-25 and Ile-30 to Val-50.

It belongs to the UPF0391 family.

The protein localises to the cell membrane. In Burkholderia cenocepacia (strain HI2424), this protein is UPF0391 membrane protein Bcen2424_6479.